Here is a 250-residue protein sequence, read N- to C-terminus: Triosephosphate isomerase (250 aa).

Position 9–11 (9–11 (NWK)) interacts with substrate. The active-site Electrophile is His-96. The Proton acceptor role is filled by Glu-166. Substrate contacts are provided by residues Gly-172, Ser-212, and 233–234 (GG).

The protein belongs to the triosephosphate isomerase family. In terms of assembly, homodimer.

The protein localises to the cytoplasm. The enzyme catalyses D-glyceraldehyde 3-phosphate = dihydroxyacetone phosphate. It functions in the pathway carbohydrate biosynthesis; gluconeogenesis. It participates in carbohydrate degradation; glycolysis; D-glyceraldehyde 3-phosphate from glycerone phosphate: step 1/1. Functionally, involved in the gluconeogenesis. Catalyzes stereospecifically the conversion of dihydroxyacetone phosphate (DHAP) to D-glyceraldehyde-3-phosphate (G3P). The polypeptide is Triosephosphate isomerase (Chlorobium phaeovibrioides (strain DSM 265 / 1930) (Prosthecochloris vibrioformis (strain DSM 265))).